A 200-amino-acid polypeptide reads, in one-letter code: 3-isopropylmalate dehydratase small subunit (200 aa).

The protein belongs to the LeuD family. LeuD type 1 subfamily. Heterodimer of LeuC and LeuD.

The catalysed reaction is (2R,3S)-3-isopropylmalate = (2S)-2-isopropylmalate. It participates in amino-acid biosynthesis; L-leucine biosynthesis; L-leucine from 3-methyl-2-oxobutanoate: step 2/4. Functionally, catalyzes the isomerization between 2-isopropylmalate and 3-isopropylmalate, via the formation of 2-isopropylmaleate. This Synechocystis sp. (strain ATCC 27184 / PCC 6803 / Kazusa) protein is 3-isopropylmalate dehydratase small subunit (leuD).